The following is a 339-amino-acid chain: Methionine import ATP-binding protein MetN 2 (339 aa).

The 240-residue stretch at 2–241 (ISFNNVSKVY…PKTKTTQNFV (240 aa)) folds into the ABC transporter domain. 38 to 45 (GFSGAGKS) serves as a coordination point for ATP.

It belongs to the ABC transporter superfamily. Methionine importer (TC 3.A.1.24) family. As to quaternary structure, the complex is composed of two ATP-binding proteins (MetN), two transmembrane proteins (MetI) and a solute-binding protein (MetQ).

The protein resides in the cell membrane. The catalysed reaction is L-methionine(out) + ATP + H2O = L-methionine(in) + ADP + phosphate + H(+). The enzyme catalyses D-methionine(out) + ATP + H2O = D-methionine(in) + ADP + phosphate + H(+). Part of the ABC transporter complex MetNIQ involved in methionine import. Responsible for energy coupling to the transport system. The protein is Methionine import ATP-binding protein MetN 2 of Bacillus cereus (strain ZK / E33L).